A 179-amino-acid chain; its full sequence is Adenine phosphoribosyltransferase (179 aa).

Belongs to the purine/pyrimidine phosphoribosyltransferase family. Homodimer.

It is found in the cytoplasm. The catalysed reaction is AMP + diphosphate = 5-phospho-alpha-D-ribose 1-diphosphate + adenine. The protein operates within purine metabolism; AMP biosynthesis via salvage pathway; AMP from adenine: step 1/1. Catalyzes a salvage reaction resulting in the formation of AMP, that is energically less costly than de novo synthesis. This chain is Adenine phosphoribosyltransferase, found in Azorhizobium caulinodans (strain ATCC 43989 / DSM 5975 / JCM 20966 / LMG 6465 / NBRC 14845 / NCIMB 13405 / ORS 571).